A 208-amino-acid polypeptide reads, in one-letter code: Large ribosomal subunit protein uL4 (208 aa).

The disordered stretch occupies residues 42–77 (SMRQGTHKTKTKTEVSGGGRKPWRQKGTGRARQGSI).

Belongs to the universal ribosomal protein uL4 family. As to quaternary structure, part of the 50S ribosomal subunit.

In terms of biological role, one of the primary rRNA binding proteins, this protein initially binds near the 5'-end of the 23S rRNA. It is important during the early stages of 50S assembly. It makes multiple contacts with different domains of the 23S rRNA in the assembled 50S subunit and ribosome. Functionally, forms part of the polypeptide exit tunnel. The sequence is that of Large ribosomal subunit protein uL4 from Spiroplasma kunkelii.